The sequence spans 168 residues: Photosystem I assembly protein Ycf3 (168 aa).

3 TPR repeats span residues 35–68 (AFTY…EIDP), 72–105 (SYIL…NPFL), and 120–153 (GEQA…TPGN).

It belongs to the Ycf3 family.

It localises to the plastid. It is found in the chloroplast thylakoid membrane. In terms of biological role, essential for the assembly of the photosystem I (PSI) complex. May act as a chaperone-like factor to guide the assembly of the PSI subunits. This is Photosystem I assembly protein Ycf3 from Phaseolus vulgaris (Kidney bean).